The primary structure comprises 427 residues: 4-hydroxy-3-methylbut-2-en-1-yl diphosphate synthase (flavodoxin) (427 aa).

[4Fe-4S] cluster contacts are provided by C300, C303, C346, and E353.

It belongs to the IspG family. [4Fe-4S] cluster serves as cofactor.

The catalysed reaction is (2E)-4-hydroxy-3-methylbut-2-enyl diphosphate + oxidized [flavodoxin] + H2O + 2 H(+) = 2-C-methyl-D-erythritol 2,4-cyclic diphosphate + reduced [flavodoxin]. It participates in isoprenoid biosynthesis; isopentenyl diphosphate biosynthesis via DXP pathway; isopentenyl diphosphate from 1-deoxy-D-xylulose 5-phosphate: step 5/6. Converts 2C-methyl-D-erythritol 2,4-cyclodiphosphate (ME-2,4cPP) into 1-hydroxy-2-methyl-2-(E)-butenyl 4-diphosphate. In Chromobacterium violaceum (strain ATCC 12472 / DSM 30191 / JCM 1249 / CCUG 213 / NBRC 12614 / NCIMB 9131 / NCTC 9757 / MK), this protein is 4-hydroxy-3-methylbut-2-en-1-yl diphosphate synthase (flavodoxin).